Reading from the N-terminus, the 401-residue chain is Transcription factor atf-2 (401 aa).

Positions 19–38 are enriched in low complexity; sequence SASAEFSSSSSDSSNFSEGS. The disordered stretch occupies residues 19 to 78; the sequence is SASAEFSSSSSDSSNFSEGSPPESRRNSVNESVIKDEHYWERRRRNNDASRRSREKRRQN. The segment covering 41–78 has biased composition (basic and acidic residues); the sequence is ESRRNSVNESVIKDEHYWERRRRNNDASRRSREKRRQN. The bZIP 1 domain occupies 54–100; that stretch reads DEHYWERRRRNNDASRRSREKRRQNDLAMEEKIMLLSAENERLKSQL. The interval 60-85 is basic motif 1; it reads RRRRNNDASRRSREKRRQNDLAMEEK. Residues 89–96 are leucine-zipper 1; that stretch reads LSAENERL. Residues 181-211 show a composition bias toward low complexity; it reads SASSLFSSSSSSAFHPFRPSESAQQSFPSSS. Disordered stretches follow at residues 181–256 and 273–345; these read SASS…PQPV and QRRP…AAKR. Polar residues-rich tracts occupy residues 222-256 and 273-283; these read DSSTDVNMPQPQLQPGSSVIQQIGQPAPSGTPQPV and QRRPSPTVPQS. Positions 305–317 are enriched in low complexity; it reads ESVSSSASFSPSH. Residues 329–392 form the bZIP 2 domain; it reads SPQYVDRRRR…AHFKSVLAQR (64 aa). A basic motif 2 region spans residues 335-360; that stretch reads RRRRNNEAAKRCRANRRAVFEYRSRR. A coiled-coil region spans residues 361-388; it reads VQLLEGENEDLRTQIETLKAEIAHFKSV. Residues 364 to 378 are leucine-zipper 2; that stretch reads LEGENEDLRTQIETL.

The protein belongs to the bZIP family. As to quaternary structure, interacts with cell death specification protein ces-2. Post-translationally, phosphorylated by mitogen-activated protein kinases pmk-2 and pmk-3. May be responsive to osmotic stress.

The protein localises to the nucleus. Acts as a transcription factor that recognizes and binds to the sequence 5'-[GA]TTA[CT]GTAA[CT]-3', a sequence present in many promoters. Involved in the development of the excretory duct cell, by positively modulating embryonic transcription of putative transcription factor lin-48, acting in concert with cell death specification protein ces-2. Negatively modulates expression of key autophagy-related genes, bec-1/ATG6 and lgg-1/ATG8, and may link together autophagy and apoptosis during development. Positively modulates expression of neuropeptide pigment dispersing factor homologs pdf-1 and pdf-2. This is Transcription factor atf-2 from Caenorhabditis elegans.